Here is a 93-residue protein sequence, read N- to C-terminus: Early E3A 10.5 kDa glycoprotein (93 aa).

An N-linked (GlcNAc...) asparagine; by host glycan is attached at asparagine 3. Residues 34 to 55 (MWWFSIALMFVCLIIMWLICCL) form a helical membrane-spanning segment.

It belongs to the adenoviridae E3A-1 family. Post-translationally, N-glycosylated and probably also O-glycosylated.

It localises to the host nucleus membrane. The chain is Early E3A 10.5 kDa glycoprotein from Homo sapiens (Human).